The sequence spans 101 residues: A-type ATP synthase subunit F (101 aa).

The protein belongs to the V-ATPase F subunit family. Has multiple subunits with at least A(3), B(3), C, D, E, F, H, I and proteolipid K(x).

It is found in the cell membrane. Component of the A-type ATP synthase that produces ATP from ADP in the presence of a proton gradient across the membrane. The polypeptide is A-type ATP synthase subunit F (Methanosarcina acetivorans (strain ATCC 35395 / DSM 2834 / JCM 12185 / C2A)).